Here is a 310-residue protein sequence, read N- to C-terminus: Elongation factor Ts, mitochondrial (310 aa).

Residues 1-42 constitute a mitochondrion transit peptide; sequence MGFQVLRSVIQAPLAKRSFLCKSCPSGLRVLYNNILLSSRSY.

It belongs to the EF-Ts family.

Its subcellular location is the mitochondrion. In terms of biological role, associates with the EF-Tu.GDP complex and induces the exchange of GDP to GTP. It remains bound to the aminoacyl-tRNA.EF-Tu.GTP complex up to the GTP hydrolysis stage on the ribosome. In Schizosaccharomyces japonicus (strain yFS275 / FY16936) (Fission yeast), this protein is Elongation factor Ts, mitochondrial (tsf1).